The sequence spans 309 residues: Thioesterase lcsJ (309 aa).

A helical transmembrane segment spans residues 11-31; the sequence is IAQVHGFVFSWWGVILLLAII. The tract at residues 61 to 83 is disordered; that stretch reads ASPTAENAQRRVPKTPKTGATDT. Residue Asn112 is glycosylated (N-linked (GlcNAc...) asparagine). Positions 239-275 are disordered; the sequence is SGWIPPRPESTGNSKSLDSLQANGHGATENGKHDAKD. Residues 248–260 show a composition bias toward polar residues; sequence STGNSKSLDSLQA.

The protein belongs to the lcsJ thioesterase family.

Its subcellular location is the membrane. The protein operates within secondary metabolite biosynthesis. Functionally, thioesterase; part of the gene cluster that mediates the biosynthesis of the lipopeptide antibiotics leucinostatins that show extensive biological activities, including antimalarial, antiviral, antibacterial, antifungal, and antitumor activities, as well as phytotoxic. Leucinostatin A contains nine amino acid residues, including the unusual amino acid 4-methyl-L-proline (MePro), 2-amino-6-hydroxy-4-methyl-8-oxodecanoic acid (AHyMeOA), 3-hydroxyleucine (HyLeu), alpha-aminoisobutyric acid (AIB), beta-Ala, a 4-methylhex-2-enoic acid at the N-terminus as well as a N1,N1-dimethylpropane-1,2-diamine (DPD) at the C-terminus. The biosynthesis of leucinostatins is probably initiated with the assembly of 4-methylhex-2-enoic acid by a reducing PKS. Two reducing polyketide synthases, lcsB and lcsC, have been identified in the cluster and it is not clear which is the one that assembles 4-methylhex-2-enoic acid since both contain KS, AT, DH, cMT, ER, KR and ACP domains. The polyketide residue might be transferred to the NRPS lcsA, mediated by two additional enzymes, the acyl-CoA ligase lcsD and the thioesterase lcsE. The linear polyketide carboxylic acid, which is released from PKS, is converted to a CoA thioester by lcsD, and then lcsE hydrolyzes the thiol bond and shuttles the polyketide intermediate to lcsA. The C domain of the first module catalyzed the condensation of 4-methylhex-2-enoic acid and MePro carried by domain A1, followed by successive condensations of nine amino acids to trigger the elongation of the linear peptide. A5 and A6 domains of lcsA are proposed to incorporate leucine, A2 AHyMeOA, and A3 incorporates HyLeu. A4, A7 and A8 incorporate AIB. The AHyMeOA in leucinostatin A activated by the A2 might be produced by the second PKS (lcsB or lcsC) present within the cluster. The MePro is probably produced via leucine cyclization and may originate from a separate pathway, independent of the cluster. Another nonproteinogenic amino acid, beta-Ala, could be produced by an aspartic acid decarboxylase also localized outside of the cluster. Two candidates are VFPBJ_01400 and VFPBJ_10476. The final peptide scaffold may be released by the NAD(P)H-dependent thioester reductase (TE) at the C-terminal region of lcsA. Transamination of the lcsA product by the transaminase lcsP may produce DPD at the C-terminus. Further hydroxylation steps performed alternatively by the cytochrome P450 monooxygenases lcsI, lcsK and lcsN then yield the non-methylated leucinostatins precursor. It is also possible that leucines can be hydroxylated prior to their incorporation into the peptide. Varying extents of methylation then lead to the formation of leucinostatins A and B. The chain is Thioesterase lcsJ from Purpureocillium lilacinum (Paecilomyces lilacinus).